We begin with the raw amino-acid sequence, 90 residues long: Small ribosomal subunit protein bS20 (90 aa).

A disordered region spans residues 1–25 (MANSAQARKRARQAAKANSHNSALR).

The protein belongs to the bacterial ribosomal protein bS20 family.

Its function is as follows. Binds directly to 16S ribosomal RNA. This chain is Small ribosomal subunit protein bS20, found in Burkholderia orbicola (strain MC0-3).